A 504-amino-acid chain; its full sequence is Alpha,alpha-trehalose-phosphate synthase [UDP-forming] (504 aa).

Positions 97 and 151 each coordinate D-glucose 6-phosphate. UDP-binding residues include Arg-287 and Lys-292. 2 residues coordinate UDP-alpha-D-glucose: Arg-287 and Lys-292. Arg-325 is a binding site for D-glucose 6-phosphate. 386 to 394 (DGMNLVSYE) contacts UDP-alpha-D-glucose. Residue 390–394 (LVSYE) coordinates UDP. The tract at residues 482–504 (AGKLPTKETPVNGETSKLETSSQ) is disordered. The span at 493-504 (NGETSKLETSSQ) shows a compositional bias: polar residues.

This sequence belongs to the glycosyltransferase 20 family.

It catalyses the reaction D-glucose 6-phosphate + UDP-alpha-D-glucose = alpha,alpha-trehalose 6-phosphate + UDP + H(+). Its pathway is carbohydrate biosynthesis. Synthase catalytic subunit of the trehalose synthase complex that catalyzes the production of trehalose from glucose-6-phosphate and UDP-alpha-D-glucose in a two step process. This chain is Alpha,alpha-trehalose-phosphate synthase [UDP-forming] (tpsA), found in Emericella nidulans (strain FGSC A4 / ATCC 38163 / CBS 112.46 / NRRL 194 / M139) (Aspergillus nidulans).